The sequence spans 272 residues: HMP-PP phosphatase (272 aa).

Catalysis depends on Asp-8, which acts as the Nucleophile. Residues Asp-8, Asp-10, and Asp-212 each coordinate Mg(2+).

The protein belongs to the HAD-like hydrolase superfamily. Cof family. The cofactor is Mg(2+).

The catalysed reaction is 4-amino-2-methyl-5-(diphosphooxymethyl)pyrimidine + H2O = 4-amino-2-methyl-5-(phosphooxymethyl)pyrimidine + phosphate + H(+). In terms of biological role, catalyzes the hydrolysis of 4-amino-2-methyl-5-hydroxymethylpyrimidine pyrophosphate (HMP-PP) to 4-amino-2-methyl-5-hydroxymethylpyrimidine phosphate (HMP-P). The protein is HMP-PP phosphatase of Shigella flexneri serotype 5b (strain 8401).